The chain runs to 172 residues: Keratin, high-sulfur matrix protein, B2A (172 aa).

Ala2 is modified (N-acetylalanine). 5 repeats span residues 27–36 (PTCCQTSCCQ), 37–46 (PTSIQTSCCQ), 47–56 (PISIQTSCCQ), 57–66 (PTSIQTSCCQ), and 67–76 (PTCLQTSGCE).

Its function is as follows. The keratin products of mammalian epidermal derivatives such as wool and hair consist of microfibrils embedded in a rigid matrix of other proteins. The matrix proteins include the high-sulfur and high-tyrosine keratins, having molecular weights of 6-20 kDa, whereas the microfibrils contain the larger, low-sulfur keratins (40-56 kDa). The polypeptide is Keratin, high-sulfur matrix protein, B2A (Ovis aries (Sheep)).